The following is a 226-amino-acid chain: Octanoyltransferase (226 aa).

The region spanning 31–226 is the BPL/LPL catalytic domain; that stretch reads PETPDALWIC…SQKLGTYLAP (196 aa). Residues 70–77, 159–161, and 172–174 each bind substrate; these read RGGQVTFH, ALG, and GVA. The active-site Acyl-thioester intermediate is the C190.

This sequence belongs to the LipB family.

Its subcellular location is the cytoplasm. The enzyme catalyses octanoyl-[ACP] + L-lysyl-[protein] = N(6)-octanoyl-L-lysyl-[protein] + holo-[ACP] + H(+). The protein operates within protein modification; protein lipoylation via endogenous pathway; protein N(6)-(lipoyl)lysine from octanoyl-[acyl-carrier-protein]: step 1/2. Catalyzes the transfer of endogenously produced octanoic acid from octanoyl-acyl-carrier-protein onto the lipoyl domains of lipoate-dependent enzymes. Lipoyl-ACP can also act as a substrate although octanoyl-ACP is likely to be the physiological substrate. The polypeptide is Octanoyltransferase (Variovorax paradoxus (strain S110)).